We begin with the raw amino-acid sequence, 211 residues long: Shikimate kinase (211 aa).

Positions 1-13 (MNASANLCAASAN) are enriched in low complexity. The segment at 1–24 (MNASANLCAASANDPQPGDQEAAH) is disordered. Residue 50–55 (GAGKTT) coordinates ATP. Threonine 54 contacts Mg(2+). Aspartate 72, arginine 96, and glycine 118 together coordinate substrate. Arginine 156 contacts ATP. Position 175 (arginine 175) interacts with substrate.

Belongs to the shikimate kinase family. Monomer. Mg(2+) serves as cofactor.

It is found in the cytoplasm. The enzyme catalyses shikimate + ATP = 3-phosphoshikimate + ADP + H(+). The protein operates within metabolic intermediate biosynthesis; chorismate biosynthesis; chorismate from D-erythrose 4-phosphate and phosphoenolpyruvate: step 5/7. Functionally, catalyzes the specific phosphorylation of the 3-hydroxyl group of shikimic acid using ATP as a cosubstrate. The polypeptide is Shikimate kinase (Bordetella parapertussis (strain 12822 / ATCC BAA-587 / NCTC 13253)).